A 465-amino-acid chain; its full sequence is Poly(A) polymerase I (465 aa).

Catalysis depends on residues D80, D82, and D162. Residues 429 to 465 are disordered; it reads SAPPDQKGMLNELDEEPSPRRRTRRPRKRAPRREGTA. The span at 448–459 shows a compositional bias: basic residues; the sequence is RRRTRRPRKRAP.

Belongs to the tRNA nucleotidyltransferase/poly(A) polymerase family.

The enzyme catalyses RNA(n) + ATP = RNA(n)-3'-adenine ribonucleotide + diphosphate. Its function is as follows. Adds poly(A) tail to the 3' end of many RNAs, which usually targets these RNAs for decay. Plays a significant role in the global control of gene expression, through influencing the rate of transcript degradation, and in the general RNA quality control. The protein is Poly(A) polymerase I of Escherichia coli O157:H7.